We begin with the raw amino-acid sequence, 1234 residues long: MTQFTTSQQAAITHDGHDVLVSASAGSGKTTVLVERIIQKILKQHADITRMLIVTFTRAATAEMRTKIQTALKKALTERRHELSGEDRRHLANQIAMVNAAKISTLDAFSLQIVQTYYYVIDLDPGFRLLTDETERYMLQERVWDDLREQLYASDEAPAFEQLTANFSGDRDDSGLQDLMFELIRQAGATTDPKAYLEGLATPYAPEKWEATFSQQIWPRVKGQLLQIATSLTQASALANQLPNPIWYQQIQADLAPLQTLLETNAPTYDTVRSVLISHEFAAWSRISKGLDDADKDTKNAAKDLRDAAKKTWQNKLAPTFALAAEQIGDLLREAQPLVATLANVALKFEDALTAEKAARHVQDYSDIAHNALRILQQKDPQTGAPIADNYRASFDEVMVDEYQDISPLQEALLAAVSTTTPGDRFMVGDVKQSIYGFRLADPQLFIHKYQTFQDAPTDPAAPERIILAENFRSTKNVLAFTNLIFSQIMDPEVGDLSYDNAAALKYGALDYGDAHPAVKVLLYSKATSDEDSSDASELPGDADDNEPVDIATGQTQLVLAEIQRLINDPDAQLWDRQAQEYRRIHYRDITLLTRQTSQNSLIQTQFAAAGVPLFVADTKNFFKTTELMVMLALLKVIDNQKQDIPLVAVLRSPIVGLSADQLALIRLAAKQVPYYDAVTAFLQAEPKTPLAQRTHDMLTHFFNQLSHFRDLARENDLVTLLWAIYQDTGFLDYVGGTPGGSQRQANLQALIDRARTYEAGGFKGLFAFIHFITLMQKQDQDLAMPAQVDPDNDAVKLMTIHKSKGLEFPVVFLMQANKHFNMSDQTGTAILTKQGIGIKWLDPETRVEYELPQYQAAKAARQNQTLAEEMRLLYVALTRAQQRLYVVGATMSGNQLTSADKTVEKWAAAAEGEARVLAPQVRSGATSYLDWIGPALIRHPQARGLAETTIKPALVGDETEFTIEIDVNPQVTPTATPEKVSDDSGTMVDLSAWFKKAYPFQAATTTTGFQSVSEIKRAFDDPDTIDLVNADRFLGPKPPMRDLTAPAFLTETPSGISPAAIGTATHLLLQLVDLAKPITMASLRALRDQLTTTQVIAVDVAKHIDLTALIRFFETDLGRLLLAKPQQVHREVPFSMLLPADQVFEALADDPGEDVLIHGIIDGYVSDEQGVTLFDYKTDHNPNTAVLVDRYRGQLNLYAQALQDLQPKPVLHRYLVFLRTGTVVDLVASGAGK.

The region spanning 2–475 (TQFTTSQQAA…IILAENFRST (474 aa)) is the UvrD-like helicase ATP-binding domain. 23–30 (ASAGSGKT) is a binding site for ATP. The region spanning 507–806 (YGALDYGDAH…KLMTIHKSKG (300 aa)) is the UvrD-like helicase C-terminal domain.

This sequence belongs to the helicase family. AddA subfamily. As to quaternary structure, heterodimer of AddA and AddB/RexB. The cofactor is Mg(2+).

The enzyme catalyses Couples ATP hydrolysis with the unwinding of duplex DNA by translocating in the 3'-5' direction.. It carries out the reaction ATP + H2O = ADP + phosphate + H(+). Functionally, the heterodimer acts as both an ATP-dependent DNA helicase and an ATP-dependent, dual-direction single-stranded exonuclease. Recognizes the chi site generating a DNA molecule suitable for the initiation of homologous recombination. The AddA nuclease domain is required for chi fragment generation; this subunit has the helicase and 3' -&gt; 5' nuclease activities. In Lacticaseibacillus paracasei (strain ATCC 334 / BCRC 17002 / CCUG 31169 / CIP 107868 / KCTC 3260 / NRRL B-441) (Lactobacillus paracasei), this protein is ATP-dependent helicase/nuclease subunit A.